Consider the following 1281-residue polypeptide: Tubulin polyglutamylase TTLL5 (1281 aa).

Residues 62–407 (RYHLSYKIVR…VCQDPAQRAS (346 aa)) enclose the TTL domain. Residues K180, 186–187 (RG), 208–211 (SRYI), and 221–223 (KFD) contribute to the ATP site. R186 provides a ligand contact to a protein. Position 247 (R247) interacts with L-glutamate. 268-269 (TN) lines the ATP pocket. 3 residues coordinate L-glutamate: Y270, S271, and K293. Mg(2+) contacts are provided by D353, E366, and N368. Residues 378–488 (PLDLKIKASM…RGGFIRIFPT (111 aa)) are c-MTBD region. Residue K384 participates in L-glutamate binding. Disordered stretches follow at residues 577–614 (MNVK…LREN), 1072–1114 (SASA…LQTG), and 1199–1281 (SSAT…HTKI). The segment covering 584–604 (ESEEEEEVALDNEDEEQEASQ) has biased composition (acidic residues). Composition is skewed to polar residues over residues 1086–1113 (SGPT…SLQT), 1199–1212 (SSAT…TTLP), 1240–1263 (ATSQ…SSLN), and 1270–1281 (ITSSTDPAHTKI).

The protein belongs to the tubulin--tyrosine ligase family. As to quaternary structure, interacts with the transcriptional coactivators NCOA1/SRC-1 and NCOA2/TIF2. Mg(2+) is required as a cofactor. Expressed in the retina, found in the rod and cone photoreceptors (at protein level). Widely expressed with highest levels in heart and skeletal muscle and low levels in other tissues.

It localises to the cell projection. Its subcellular location is the cilium. The protein resides in the cytoplasm. The protein localises to the cytoskeleton. It is found in the cilium basal body. It localises to the nucleus. It carries out the reaction L-glutamyl-[protein] + L-glutamate + ATP = gamma-L-glutamyl-L-glutamyl-[protein] + ADP + phosphate + H(+). The enzyme catalyses (L-glutamyl)(n)-gamma-L-glutamyl-L-glutamyl-[protein] + L-glutamate + ATP = (L-glutamyl)(n+1)-gamma-L-glutamyl-L-glutamyl-[protein] + ADP + phosphate + H(+). In terms of biological role, polyglutamylase which modifies tubulin, generating polyglutamate side chains on the gamma-carboxyl group of specific glutamate residues within the C-terminal tail of tubulin. Preferentially mediates ATP-dependent initiation step of the polyglutamylation reaction over the elongation step. Preferentially modifies the alpha-tubulin tail over a beta-tail. Required for CCSAP localization to both polyglutamylated spindle and cilia microtubules. Increases the effects of transcriptional coactivator NCOA2/TIF2 in glucocorticoid receptor-mediated repression and induction and in androgen receptor-mediated induction. This Homo sapiens (Human) protein is Tubulin polyglutamylase TTLL5.